Reading from the N-terminus, the 1235-residue chain is Bromodomain-containing protein 8 (1235 aa).

The residue at position 85 (lysine 85) is an N6-acetyllysine. The stretch at 97 to 171 forms a coiled coil; that stretch reads VRKLTAERVE…ATDAAYQARQ (75 aa). Arginine 124 is modified (phosphothreonine). Residues leucine 128 and aspartate 144 each carry the phosphoserine modification. The segment at 186-205 is disordered; sequence RSPIDSASPGGDYPLGDLTP. Position 264 is a phosphothreonine (alanine 264). Serine 268, serine 284, serine 383, and serine 387 each carry phosphoserine. A Glycyl lysine isopeptide (Lys-Gly) (interchain with G-Cter in SUMO2) cross-link involves residue lysine 469. Lysine 481 bears the N6-acetyllysine; alternate mark. Lysine 481 participates in a covalent cross-link: Glycyl lysine isopeptide (Lys-Gly) (interchain with G-Cter in SUMO1); alternate. Lysine 481 is covalently cross-linked (Glycyl lysine isopeptide (Lys-Gly) (interchain with G-Cter in SUMO2); alternate). Residues lysine 509 and lysine 575 each participate in a glycyl lysine isopeptide (Lys-Gly) (interchain with G-Cter in SUMO2) cross-link. The tract at residues 551–597 is disordered; sequence TAAGEIVEADVAIGKGDETPLTNVKTEASPESMLSPSHGSNPIEDPL. At serine 579 the chain carries Phosphoserine. Lysine 612 participates in a covalent cross-link: Glycyl lysine isopeptide (Lys-Gly) (interchain with G-Cter in SUMO2). Serine 621, serine 637, and serine 641 each carry phosphoserine. The disordered stretch occupies residues 621–672; the sequence is SQIKDAPGEDEEEDGVSEAASLEEPKEEDQGEGYLSEMDNEPPVSESDDGFS. The 106-residue stretch at 706–811 folds into the Bromo 1 domain; sequence IQAQKIWKKA…RDVLEQIQQF (106 aa). Disordered stretches follow at residues 827-848, 903-940, and 966-999; these read AKSLRGRDSTRKQDASEKDSVP, ETEDPEAEELEESSPEREPSELLVGDGGSEESQEAARK, and ESSEGCCPPSGTRQEGREIKASEGERELCRETEE. Residues 831 to 846 are compositionally biased toward basic and acidic residues; the sequence is RGRDSTRKQDASEKDS. Residues 905 to 915 show a composition bias toward acidic residues; it reads EDPEAEELEES. Leucine 924 is subject to Phosphoserine. Over residues 979–999 the composition is skewed to basic and acidic residues; that stretch reads QEGREIKASEGERELCRETEE. Residues 1099–1207 enclose the Bromo 2 domain; it reads DDPVQDHLLF…QEVLEQIQVL (109 aa).

As to quaternary structure, component of the NuA4 histone acetyltransferase complex which contains the catalytic subunit KAT5/TIP60 and the subunits EP400, TRRAP/PAF400, BRD8/SMAP, EPC1, DMAP1/DNMAP1, RUVBL1/TIP49, RUVBL2, ING3, actin, ACTL6A/BAF53A, MORF4L1/MRG15, MORF4L2/MRGX, MRGBP, YEATS4/GAS41, VPS72/YL1 and MEAF6. The NuA4 complex interacts with MYC and the adenovirus E1A protein. Component of a NuA4-related complex which contains EP400, TRRAP/PAF400, SRCAP, BRD8/SMAP, EPC1, DMAP1/DNMAP1, RUVBL1/TIP49, RUVBL2, actin, ACTL6A/BAF53A, VPS72 and YEATS4/GAS41. BRD8 isoform 2 interacts with RXRA/NR2B1 and THRB/ERBA2. Component of a SWR1-like complex. As to expression, expressed in adipose tissue, brain, heart, kidney, liver, lung, pancreas, placenta and skeletal muscle.

The protein resides in the nucleus. May act as a coactivator during transcriptional activation by hormone-activated nuclear receptors (NR). Isoform 2 stimulates transcriptional activation by AR/DHTR, ESR1/NR3A1, RXRA/NR2B1 and THRB/ERBA2. At least isoform 1 and isoform 2 are components of the NuA4 histone acetyltransferase (HAT) complex which is involved in transcriptional activation of select genes principally by acetylation of nucleosomal histones H4 and H2A. This modification may both alter nucleosome - DNA interactions and promote interaction of the modified histones with other proteins which positively regulate transcription. This complex may be required for the activation of transcriptional programs associated with oncogene and proto-oncogene mediated growth induction, tumor suppressor mediated growth arrest and replicative senescence, apoptosis, and DNA repair. NuA4 may also play a direct role in DNA repair when recruited to sites of DNA damage. Component of a SWR1-like complex that specifically mediates the removal of histone H2A.Z/H2AZ1 from the nucleosome. This is Bromodomain-containing protein 8 (BRD8) from Homo sapiens (Human).